Reading from the N-terminus, the 344-residue chain is MMTSVPPRKTWWKSKKTVKVRRSYSTFPSLNAWEKFRGLLPVDGETNPGVGLGVEEGLLCQMVHSPEFNLFPNSVVFESNFVQVRRSRDWKEIYKASNTMALGVTSSVPCLPLPNILLMARVIWHQGQSQTWNRPSTVPSINLKSILPLKFVELQIWDHHERILRLRTVTEKIYFLKLHPDHPETVFRFWIRLVQILHKGLSITTKDPTILVTHCLVPKSLCSPGGKSELVQKNSKGLQPSESLTHLMAQGESEALSQIFSDLHQQKQYSSSRSEKVQINKTSSEKATPCEDSIPCTCDLNWRDAFMFGEWERENPSGPQPHSLLSTLAASSRPRLSLIGGNSI.

The protein belongs to the GARIN family.

It is found in the golgi apparatus. In terms of biological role, RAB2B effector protein required for accurate acrosome formation and normal male fertility. In complex with RAB2A/RAB2B, seems to suppress excessive vesicle trafficking during acrosome formation. The chain is Golgi-associated RAB2 interactor protein 1B (Garin1b) from Rattus norvegicus (Rat).